A 262-amino-acid polypeptide reads, in one-letter code: Acyl-[acyl-carrier-protein]--UDP-N-acetylglucosamine O-acyltransferase (262 aa).

Belongs to the transferase hexapeptide repeat family. LpxA subfamily. As to quaternary structure, homotrimer.

It localises to the cytoplasm. The enzyme catalyses a (3R)-hydroxyacyl-[ACP] + UDP-N-acetyl-alpha-D-glucosamine = a UDP-3-O-[(3R)-3-hydroxyacyl]-N-acetyl-alpha-D-glucosamine + holo-[ACP]. The protein operates within glycolipid biosynthesis; lipid IV(A) biosynthesis; lipid IV(A) from (3R)-3-hydroxytetradecanoyl-[acyl-carrier-protein] and UDP-N-acetyl-alpha-D-glucosamine: step 1/6. Functionally, involved in the biosynthesis of lipid A, a phosphorylated glycolipid that anchors the lipopolysaccharide to the outer membrane of the cell. This Paraburkholderia xenovorans (strain LB400) protein is Acyl-[acyl-carrier-protein]--UDP-N-acetylglucosamine O-acyltransferase.